The following is a 304-amino-acid chain: Dihydroorotate dehydrogenase B (NAD(+)), catalytic subunit (304 aa).

Residues S22 and 46–47 each bind FMN; that span reads KG. Substrate-binding positions include K46 and 70–74; that span reads NAIGL. FMN is bound by residues N100 and N128. Residue N128 coordinates substrate. C131 acts as the Nucleophile in catalysis. K166 and I192 together coordinate FMN. 193-194 contacts substrate; the sequence is NT. FMN is bound by residues G218, 244-245, and 266-267; these read GG and GT.

This sequence belongs to the dihydroorotate dehydrogenase family. Type 1 subfamily. In terms of assembly, heterotetramer of 2 PyrK and 2 PyrD type B subunits. FMN is required as a cofactor.

The protein localises to the cytoplasm. The enzyme catalyses (S)-dihydroorotate + NAD(+) = orotate + NADH + H(+). Its pathway is pyrimidine metabolism; UMP biosynthesis via de novo pathway; orotate from (S)-dihydroorotate (NAD(+) route): step 1/1. Functionally, catalyzes the conversion of dihydroorotate to orotate with NAD(+) as electron acceptor. The polypeptide is Dihydroorotate dehydrogenase B (NAD(+)), catalytic subunit (pyrD) (Trichlorobacter lovleyi (strain ATCC BAA-1151 / DSM 17278 / SZ) (Geobacter lovleyi)).